The sequence spans 892 residues: Alpha-actinin-1 (892 aa).

Position 1 is an N-acetylmethionine (Met-1). The segment at Met-1–His-247 is actin-binding. At Ser-6 the chain carries Phosphoserine. Phosphotyrosine; by FAK1 is present on Tyr-12. 2 consecutive Calponin-homology (CH) domains span residues Lys-31–Ala-135 and Thr-144–Ser-250. 2 positions are modified to N6-acetyllysine: Lys-95 and Lys-195. 4 Spectrin repeats span residues Gln-274–Asn-384, His-394–Arg-499, Gln-509–Glu-620, and Arg-630–Asn-733. Residues Gln-274–Asn-733 form an interaction with DDN region. Ser-471 is modified (phosphoserine). N6-acetyllysine is present on Lys-676. Phosphoserine is present on Ser-677. EF-hand domains are found at residues Glu-746–Asp-781 and Gln-787–Asp-822. Ca(2+) is bound by residues Asp-759, Asp-761, Ser-763, Thr-765, and Glu-770. At Ser-890 the chain carries Phosphoserine.

It belongs to the alpha-actinin family. In terms of assembly, homodimer; antiparallel. Interacts with MYOZ2, TTID and LPP. Interacts with DDN. Interacts with PSD. Interacts with MICALL2. Interacts with DNM2 and CTTN. Interacts with PDLIM1. Interacts with PDLIM2. Interacts with PDLIM4 (via PDZ domain). Interacts with IGSF8.

It localises to the cytoplasm. It is found in the cytoskeleton. The protein resides in the myofibril. The protein localises to the sarcomere. Its subcellular location is the z line. It localises to the cell membrane. It is found in the cell junction. The protein resides in the cell projection. The protein localises to the ruffle. F-actin cross-linking protein which is thought to anchor actin to a variety of intracellular structures. Association with IGSF8 regulates the immune synapse formation and is required for efficient T-cell activation. This is Alpha-actinin-1 (Actn1) from Rattus norvegicus (Rat).